A 693-amino-acid chain; its full sequence is MAAGSHGGYRGYEVAREREHDVGVSRRSKEHYHHRHPSRHRDSERRRDGGRSGGRELSNGYSHRRDSPRPPPRRRPSEGRTEDREPGEVSGGSGSERSGERPMKTREPRENGVTRVSKEEAKMSPSKKRKQSPVIWDRNGSQRQARDPVRGIREVDAVVAEIIMHQSHSLPVMSSLSSIGDGHSPMILDVSVDKVQEYEKNRIVDEEEEGYPTMRNILTSRWADAGDEEENVFVPKKKKSVSPVDSIERGSTKKVTSPESGEVLVYNSVRSSSRSSDSGVLQGSANRDLEVEKGDNIDVEKAADDDYPAGHLLDSDFEGEDCRSETPECTRSPRRCINMLQGCRSVDEFERLNTINEGTYGVVFRVRDKRTGEIVALKKVKMEKEREGFPLTSLREMNILLSFHHPSIVEVKEVVVGSNDRDIFMVMEYMEHDLKGVMETMKQPYSQSEVKCLMLQLLEGVKYLHDNWVLHRDLKTSNLLLNNRGELKICDFGLSRQYGSPLKPYTQLVVTLWYRAPELLLGAKDYSTAIDMWSLGCIMGELLSKGPLFNGKSEIDQLDKIFRTLGTPDENIWPGYSKLPGATVKFGKQTHNRLRDKFRAVSFTGGPMLSEAGFDLLNRLLTYDPEKRISAEDALNHEWFRELPLPRSKDFMPTFPALNEQDRRFKKHMKSPDPLEEQWMKEQGNNGDRGLFG.

A compositionally biased stretch (gly residues) spans 1-10 (MAAGSHGGYR). Disordered stretches follow at residues 1-148 (MAAG…ARDP) and 236-308 (KKKK…DDYP). Residues 13–24 (EVAREREHDVGV) show a composition bias toward basic and acidic residues. Positions 26-39 (RRSKEHYHHRHPSR) are enriched in basic residues. Composition is skewed to basic and acidic residues over residues 40–54 (HRDSERRRDGGRSGG), 75–87 (RPSEGRTEDREPG), and 97–122 (RSGERPMKTREPRENGVTRVSKEEAK). Low complexity predominate over residues 268 to 284 (SVRSSSRSSDSGVLQGS). The span at 287-304 (RDLEVEKGDNIDVEKAAD) shows a compositional bias: basic and acidic residues. The region spanning 349–640 (FERLNTINEG…AEDALNHEWF (292 aa)) is the Protein kinase domain. ATP is bound by residues 355–363 (INEGTYGVV) and Lys378. A Phosphothreonine modification is found at Thr359. Tyr360 is subject to Phosphotyrosine. Asp473 serves as the catalytic Proton acceptor. A Phosphoserine modification is found at Ser500. Thr506 is modified (phosphothreonine). Positions 664–693 (RFKKHMKSPDPLEEQWMKEQGNNGDRGLFG) are disordered.

Belongs to the protein kinase superfamily. CMGC Ser/Thr protein kinase family. CDC2/CDKX subfamily.

It catalyses the reaction L-seryl-[protein] + ATP = O-phospho-L-seryl-[protein] + ADP + H(+). It carries out the reaction L-threonyl-[protein] + ATP = O-phospho-L-threonyl-[protein] + ADP + H(+). The catalysed reaction is [DNA-directed RNA polymerase] + ATP = phospho-[DNA-directed RNA polymerase] + ADP + H(+). This is Cyclin-dependent kinase G-1 (CDKG-1) from Oryza sativa subsp. indica (Rice).